A 192-amino-acid polypeptide reads, in one-letter code: UPF0149 protein YgfB (192 aa).

It belongs to the UPF0149 family.

The chain is UPF0149 protein YgfB from Salmonella typhi.